Reading from the N-terminus, the 337-residue chain is Biotin synthase (337 aa).

The Radical SAM core domain maps to 58–283; the sequence is PEVEVEGIIS…RTILRFAGGR (226 aa). The [4Fe-4S] cluster site is built by cysteine 73, cysteine 77, and cysteine 80. Cysteine 116, cysteine 149, cysteine 208, and arginine 278 together coordinate [2Fe-2S] cluster.

It belongs to the radical SAM superfamily. Biotin synthase family. Homodimer. [4Fe-4S] cluster is required as a cofactor. Requires [2Fe-2S] cluster as cofactor.

It catalyses the reaction (4R,5S)-dethiobiotin + (sulfur carrier)-SH + 2 reduced [2Fe-2S]-[ferredoxin] + 2 S-adenosyl-L-methionine = (sulfur carrier)-H + biotin + 2 5'-deoxyadenosine + 2 L-methionine + 2 oxidized [2Fe-2S]-[ferredoxin]. It participates in cofactor biosynthesis; biotin biosynthesis; biotin from 7,8-diaminononanoate: step 2/2. Its function is as follows. Catalyzes the conversion of dethiobiotin (DTB) to biotin by the insertion of a sulfur atom into dethiobiotin via a radical-based mechanism. This chain is Biotin synthase, found in Rhodococcus jostii (strain RHA1).